The chain runs to 336 residues: Aspartate--ammonia ligase (336 aa).

The protein belongs to the class-II aminoacyl-tRNA synthetase family. AsnA subfamily.

The protein resides in the cytoplasm. The enzyme catalyses L-aspartate + NH4(+) + ATP = L-asparagine + AMP + diphosphate + H(+). It participates in amino-acid biosynthesis; L-asparagine biosynthesis; L-asparagine from L-aspartate (ammonia route): step 1/1. The polypeptide is Aspartate--ammonia ligase (Clostridium perfringens (strain SM101 / Type A)).